The sequence spans 954 residues: Lysine-specific demethylase JMJ14 (954 aa).

Residues 1 to 46 form a disordered region; that stretch reads MDQLASLAESVAMEEDSEKQSIKGESSLEPDSTPSSPKITARWNPS. Polar residues predominate over residues 29–38; sequence EPDSTPSSPK. The JmjN domain maps to 56 to 97; that stretch reads APIFYPTNEDFDDPLGYIEKLRSKAESYGICRIVPPVAWRPP. A Nuclear localization signal 1 motif is present at residues 136–143; it reads RKRRRISK. The disordered stretch occupies residues 148-170; the sequence is RRKRDSGCDTASSGSSDSEGKFG. One can recognise a JmjC domain in the interval 263–429; it reads QYSQCGWNLN…HGQNAVEGYS (167 aa). Fe cation-binding residues include H309, E311, and H397. A Nuclear localization signal 2 motif is present at residues 470-477; sequence WKRVCSED. 8 residues coordinate Zn(2+): C519, C522, C533, C535, C542, H545, C550, and C552. A C5HC2 zinc finger spans residues 519 to 571; that stretch reads CFLCFYDLHMSASSCKCSPNRFACLIHAKDLCSCESKDRYILIRHTLDELWAL. The tract at residues 641-670 is disordered; sequence SNKEVQLKQDGDSDVNRHGHESERNHVHGI. The span at 645–670 shows a compositional bias: basic and acidic residues; sequence VQLKQDGDSDVNRHGHESERNHVHGI. The FYR N-terminal domain maps to 726-784; sequence ATNRLSLSVELLSSGSLVVKKLWCSKQAIYPKGFKSRVKFLSVLDPTNLTNYISEVLDA. The 91-residue stretch at 786 to 876 folds into the FYR C-terminal domain; it reads LLGPLFRVSV…HQLEEYWNQK (91 aa). Residues 884–905 form a disordered region; sequence EPIKEGEKDDTEKGGASDPSLD. A compositionally biased stretch (basic and acidic residues) spans 885-905; it reads PIKEGEKDDTEKGGASDPSLD.

Belongs to the JARID1 histone demethylase family. Interacts with NAC050 and NAC051/NAC052. Interacts with THAL in the nucleus. The cofactor is Fe(2+). Expressed in shoot apex, primary root tip, trichomes of young leaves, leaf vascular tissues, anther filaments and styles. Detected in inflorescences, leaves, stems, roots and siliques. Mostly expressed in floral organs, and, at low levels, in other organs.

The protein resides in the nucleus. It is found in the nucleoplasm. The catalysed reaction is N(6),N(6),N(6)-trimethyl-L-lysyl(4)-[histone H3] + 2-oxoglutarate + O2 = N(6),N(6)-dimethyl-L-lysyl(4)-[histone H3] + formaldehyde + succinate + CO2. It catalyses the reaction N(6),N(6)-dimethyl-L-lysyl(4)-[histone H3] + 2-oxoglutarate + O2 = N(6)-methyl-L-lysyl(4)-[histone H3] + formaldehyde + succinate + CO2. The enzyme catalyses N(6)-methyl-L-lysyl(4)-[histone H3] + 2-oxoglutarate + O2 = L-lysyl(4)-[histone H3] + formaldehyde + succinate + CO2. It carries out the reaction N(6),N(6),N(6)-trimethyl-L-lysyl(4)-[histone H3] + 3 2-oxoglutarate + 3 O2 = L-lysyl(4)-[histone H3] + 3 formaldehyde + 3 succinate + 3 CO2. Its function is as follows. Transcriptional repressor. Histone demethylase that demethylates 'Lys-4' (H3K4me) of histone H3 with a higher activity for H3K4me3 and H3K4me2 than H3K4me1. No activity on H3K9me3/2, H3K36me3/2 and H3K27me3/2. Function as a nocturne 'eraser' to counteract the diurnal 'writer' methylase activity of ATXR3/SDG2 thus orchestrating the circadian rhythm of histone modifications (e.g. H3K4me3) and modulating the rhythmic expression of diurnal target genes; this mechanism also relies on the circadian clock oscillators CCA1 and LHY. Involved in a negative regulation of root meristem growth upon suboptimal root growth conditions. Represses FT and TSF expression to inhibit the floral transition. Binds around the transcription start site of the FT locus. Involved in the DRM2-mediated maintenance of DNA methylation, but not required for the de novo DNA methylation. Required for demethylating histone H3K4me3 at the target of RNA silencing. Counteracts the DNA methylation of expressed transgenes; specific attenuation of transgene DNA methylation enhances the production of aberrant RNAs (e.g. uncapped and antisense) that readily induce systemic RDR6-dependent post-transcriptional transgene silencing (PTGS) spreading. Together with NAC051/NAC052 and NAC050, regulates gene expression and flowering time, probably by the promotion of RNA-mediated gene silencing. Together with JMJ16 and JMJ17, required for plant growth and development. Promotes local and systemic immunity (especially toward the bacterial pathogen Pseudomonas syringae Pst DC3000 avrRpt2) by regulating positively pathogen-induced H3K4me3 enrichment and expression of defense genes involved in salicylic acid (SA)- and pipecolic acid (Pip)-mediated defense pathways (e.g. PR1, FMO1, ALD1 and SARD4). The chain is Lysine-specific demethylase JMJ14 from Arabidopsis thaliana (Mouse-ear cress).